Reading from the N-terminus, the 122-residue chain is Large ribosomal subunit protein uL22 (122 aa).

This sequence belongs to the universal ribosomal protein uL22 family. As to quaternary structure, part of the 50S ribosomal subunit.

Its function is as follows. This protein binds specifically to 23S rRNA; its binding is stimulated by other ribosomal proteins, e.g. L4, L17, and L20. It is important during the early stages of 50S assembly. It makes multiple contacts with different domains of the 23S rRNA in the assembled 50S subunit and ribosome. Functionally, the globular domain of the protein is located near the polypeptide exit tunnel on the outside of the subunit, while an extended beta-hairpin is found that lines the wall of the exit tunnel in the center of the 70S ribosome. The sequence is that of Large ribosomal subunit protein uL22 from Caldicellulosiruptor saccharolyticus (strain ATCC 43494 / DSM 8903 / Tp8T 6331).